A 138-amino-acid chain; its full sequence is Class I hydrophobin 3 (138 aa).

Residues 1–16 form the signal peptide; it reads MRFFLAITALVAAVTA. 4 disulfides stabilise this stretch: C40-C111, C48-C105, C49-C87, and C112-C130.

It belongs to the fungal hydrophobin family. In terms of assembly, self-assembles to form functional amyloid fibrils called rodlets. Self-assembly into fibrillar rodlets occurs spontaneously at hydrophobic:hydrophilic interfaces and the rodlets further associate laterally to form amphipathic monolayers.

Its subcellular location is the secreted. It localises to the cell wall. In terms of biological role, aerial growth, conidiation, and dispersal of filamentous fungi in the environment rely upon a capability of their secreting small amphipathic proteins called hydrophobins (HPBs) with low sequence identity. Class I can self-assemble into an outermost layer of rodlet bundles on aerial cell surfaces, conferring cellular hydrophobicity that supports fungal growth, development and dispersal; whereas Class II form highly ordered films at water-air interfaces through intermolecular interactions but contribute nothing to the rodlet structure. HYD3 is a class I hydrophobin that contributes to the formation of aerial hyphae and fruiting bodies. This Cordyceps militaris (Caterpillar fungus) protein is Class I hydrophobin 3.